The primary structure comprises 406 residues: Putative 12-oxophytodienoate reductase 12 (406 aa).

Residues 41–43, A74, and Q119 each bind FMN; that span reads PLT. Substrate is bound at residue 188–191; the sequence is HAAN. FMN contacts are provided by residues R240, G317, and 338–339; that span reads GR.

The protein belongs to the NADH:flavin oxidoreductase/NADH oxidase family. The cofactor is FMN.

In terms of biological role, putative oxophytodienoate reductase that may be involved in the biosynthesis or metabolism of oxylipin signaling molecules. The chain is Putative 12-oxophytodienoate reductase 12 (OPR12) from Oryza sativa subsp. japonica (Rice).